A 526-amino-acid chain; its full sequence is Dual specificity tyrosine-phosphorylation-regulated kinase 2 (526 aa).

Polar residues-rich tracts occupy residues 30 to 40 and 60 to 70; these read TTQPNGLTTLG and GSSSSLKSTDG. Residues 30–76 are disordered; it reads TTQPNGLTTLGKSGLPVVQDRQSESAHRRQGSSSSLKSTDGTGKVKA. T31 carries the post-translational modification Phosphothreonine; by ATM. The short motif at 114-116 is the Nuclear localization signal element; the sequence is KKR. A Protein kinase domain is found at 147–460; that stretch reads YEVLKVIGKG…PSQALRHPWL (314 aa). ATP contacts are provided by residues 153–161, K176, and 226–229; these read IGKGSFGQV and FELL. D273 (proton acceptor) is an active-site residue. Residue Y307 is modified to Phosphotyrosine. S367 is subject to Phosphoserine; by ATM. The interval 462 to 499 is disordered; that stretch reads RRLPKPPTGEKASAKRITESTGAITSISKLPPTSSSAS. The segment covering 480–499 has biased composition (polar residues); sequence ESTGAITSISKLPPTSSSAS.

The protein belongs to the protein kinase superfamily. CMGC Ser/Thr protein kinase family. MNB/DYRK subfamily. As to quaternary structure, interacts with MDM2. Requires Mg(2+) as cofactor. Mn(2+) serves as cofactor. In terms of processing, phosphorylated on serine/threonine residues. Phosphorylation on Thr-31 and Ser-367 by ATM in response to genotoxic stress disrupts MDM2 binding and prevents MDM2-mediated ubiquitination and subsequent proteasome degradation, thus promoting p53/TP53-mediated apoptosis. Post-translationally, ubiquitination in nucleus by MDM2 in normal conditions leads to proteasome degradation.

It is found in the cytoplasm. The protein localises to the nucleus. The enzyme catalyses L-seryl-[protein] + ATP = O-phospho-L-seryl-[protein] + ADP + H(+). It carries out the reaction L-threonyl-[protein] + ATP = O-phospho-L-threonyl-[protein] + ADP + H(+). It catalyses the reaction L-tyrosyl-[protein] + ATP = O-phospho-L-tyrosyl-[protein] + ADP + H(+). With respect to regulation, autophosphorylates on tyrosine residues. Its function is as follows. Serine/threonine-protein kinase involved in the control of mitotic transition and the regulation of cellular growth and/or development. This Gallus gallus (Chicken) protein is Dual specificity tyrosine-phosphorylation-regulated kinase 2.